The chain runs to 285 residues: Retron Ec67 DNA adenine methylase (285 aa).

The S-adenosyl-L-methionine site is built by Trp7, Lys11, Asp51, and Asp179.

This sequence belongs to the N(4)/N(6)-methyltransferase family.

It carries out the reaction a 2'-deoxyadenosine in DNA + S-adenosyl-L-methionine = an N(6)-methyl-2'-deoxyadenosine in DNA + S-adenosyl-L-homocysteine + H(+). In terms of biological role, an alpha subtype methylase that recognizes the double-stranded sequence 5'-GATC-3' and methylates A-2 on both strands. May play a regulatory role in the functions of the retron. The sequence is that of Retron Ec67 DNA adenine methylase from Escherichia coli.